Consider the following 32-residue polypeptide: MNSEKQSRQWAHGADMVVGQLEAQGVKQVFGI.

The protein belongs to the TPP enzyme family. Homodimer.

The catalysed reaction is 2 pyruvate + H(+) = (2S)-2-acetolactate + CO2. It functions in the pathway polyol metabolism; (R,R)-butane-2,3-diol biosynthesis; (R,R)-butane-2,3-diol from pyruvate: step 1/3. The chain is Acetolactate synthase, catabolic (budB) from Klebsiella aerogenes (Enterobacter aerogenes).